The following is a 1014-amino-acid chain: Beta-galactosidase (1014 aa).

Glu-460 (proton donor) is an active-site residue. Residue Glu-527 is the Nucleophile of the active site.

This sequence belongs to the glycosyl hydrolase 2 family.

The catalysed reaction is Hydrolysis of terminal non-reducing beta-D-galactose residues in beta-D-galactosides.. This Halalkalibacterium halodurans (strain ATCC BAA-125 / DSM 18197 / FERM 7344 / JCM 9153 / C-125) (Bacillus halodurans) protein is Beta-galactosidase (lacZ).